The chain runs to 369 residues: NAD(P)H-quinone oxidoreductase subunit 1, chloroplastic (369 aa).

The next 5 helical transmembrane spans lie at 25 to 45, 104 to 124, 130 to 150, 270 to 290, and 306 to 326; these read FGFIWIITPILTYTLGVTIGI, VMVVVPVFLSYLVIPLGHGII, IGVFFWIAVSSVAPLGLLTAG, LSATILYLGGWNSPIPFLFLP, and VISITIAIIITLAKAYSFLFI.

It belongs to the complex I subunit 1 family. As to quaternary structure, NDH is composed of at least 16 different subunits, 5 of which are encoded in the nucleus.

The protein localises to the plastid. It is found in the chloroplast thylakoid membrane. It catalyses the reaction a plastoquinone + NADH + (n+1) H(+)(in) = a plastoquinol + NAD(+) + n H(+)(out). The enzyme catalyses a plastoquinone + NADPH + (n+1) H(+)(in) = a plastoquinol + NADP(+) + n H(+)(out). NDH shuttles electrons from NAD(P)H:plastoquinone, via FMN and iron-sulfur (Fe-S) centers, to quinones in the photosynthetic chain and possibly in a chloroplast respiratory chain. The immediate electron acceptor for the enzyme in this species is believed to be plastoquinone. Couples the redox reaction to proton translocation, and thus conserves the redox energy in a proton gradient. The chain is NAD(P)H-quinone oxidoreductase subunit 1, chloroplastic from Huperzia lucidula (Shining clubmoss).